The following is a 55-amino-acid chain: ATP synthase F(0) complex subunit 8 (55 aa).

Residues 8-24 traverse the membrane as a helical segment; it reads PWFMIMLMTWFTYSLLI.

It belongs to the ATPase protein 8 family. Component of the ATP synthase complex composed at least of ATP5F1A/subunit alpha, ATP5F1B/subunit beta, ATP5MC1/subunit c (homooctomer), MT-ATP6/subunit a, MT-ATP8/subunit 8, ATP5ME/subunit e, ATP5MF/subunit f, ATP5MG/subunit g, ATP5MK/subunit k, ATP5MJ/subunit j, ATP5F1C/subunit gamma, ATP5F1D/subunit delta, ATP5F1E/subunit epsilon, ATP5PF/subunit F6, ATP5PB/subunit b, ATP5PD/subunit d, ATP5PO/subunit OSCP. ATP synthase complex consists of a soluble F(1) head domain (subunits alpha(3) and beta(3)) - the catalytic core - and a membrane F(0) domain - the membrane proton channel (subunits c, a, 8, e, f, g, k and j). These two domains are linked by a central stalk (subunits gamma, delta, and epsilon) rotating inside the F1 region and a stationary peripheral stalk (subunits F6, b, d, and OSCP).

The protein localises to the mitochondrion membrane. In terms of biological role, subunit 8, of the mitochondrial membrane ATP synthase complex (F(1)F(0) ATP synthase or Complex V) that produces ATP from ADP in the presence of a proton gradient across the membrane which is generated by electron transport complexes of the respiratory chain. ATP synthase complex consist of a soluble F(1) head domain - the catalytic core - and a membrane F(1) domain - the membrane proton channel. These two domains are linked by a central stalk rotating inside the F(1) region and a stationary peripheral stalk. During catalysis, ATP synthesis in the catalytic domain of F(1) is coupled via a rotary mechanism of the central stalk subunits to proton translocation. In vivo, can only synthesize ATP although its ATP hydrolase activity can be activated artificially in vitro. Part of the complex F(0) domain. This chain is ATP synthase F(0) complex subunit 8, found in Coturnix japonica (Japanese quail).